A 134-amino-acid polypeptide reads, in one-letter code: Small ribosomal subunit protein uS8c (134 aa).

Belongs to the universal ribosomal protein uS8 family. In terms of assembly, part of the 30S ribosomal subunit.

The protein localises to the plastid. It is found in the chloroplast. One of the primary rRNA binding proteins, it binds directly to 16S rRNA central domain where it helps coordinate assembly of the platform of the 30S subunit. This chain is Small ribosomal subunit protein uS8c (rps8), found in Ipomoea purpurea (Common morning glory).